The chain runs to 149 residues: Transcriptional repressor NrdR (149 aa).

The segment at 3–34 (CPFCSHPETQVVETRVAEDGDFVRRRRQCGAC) is a zinc-finger region. One can recognise an ATP-cone domain in the interval 49 to 139 (PNVVKKDGRR…VYRNFEDIDE (91 aa)).

Belongs to the NrdR family. Requires Zn(2+) as cofactor.

Negatively regulates transcription of bacterial ribonucleotide reductase nrd genes and operons by binding to NrdR-boxes. This chain is Transcriptional repressor NrdR, found in Paracidovorax citrulli (strain AAC00-1) (Acidovorax citrulli).